A 285-amino-acid chain; its full sequence is Putative pyruvate, phosphate dikinase regulatory protein (285 aa).

ADP is bound at residue 165–172; that stretch reads GVSRTSKT.

Belongs to the pyruvate, phosphate/water dikinase regulatory protein family. PDRP subfamily.

The catalysed reaction is N(tele)-phospho-L-histidyl/L-threonyl-[pyruvate, phosphate dikinase] + ADP = N(tele)-phospho-L-histidyl/O-phospho-L-threonyl-[pyruvate, phosphate dikinase] + AMP + H(+). The enzyme catalyses N(tele)-phospho-L-histidyl/O-phospho-L-threonyl-[pyruvate, phosphate dikinase] + phosphate + H(+) = N(tele)-phospho-L-histidyl/L-threonyl-[pyruvate, phosphate dikinase] + diphosphate. In terms of biological role, bifunctional serine/threonine kinase and phosphorylase involved in the regulation of the pyruvate, phosphate dikinase (PPDK) by catalyzing its phosphorylation/dephosphorylation. The sequence is that of Putative pyruvate, phosphate dikinase regulatory protein from Lactobacillus delbrueckii subsp. bulgaricus (strain ATCC 11842 / DSM 20081 / BCRC 10696 / JCM 1002 / NBRC 13953 / NCIMB 11778 / NCTC 12712 / WDCM 00102 / Lb 14).